The primary structure comprises 166 residues: Cyclin-dependent kinase 4 inhibitor D (166 aa).

M1 is modified (N-acetylmethionine). ANK repeat units lie at residues 41-69 (FGKT…SPNV), 73-102 (SGTS…DVNV), 106-135 (TGAL…LHRR), and 138-166 (RGLT…VAPL).

The protein belongs to the CDKN2 cyclin-dependent kinase inhibitor family. Interacts with CDK6.

Its subcellular location is the nucleus. The protein resides in the cytoplasm. In terms of biological role, interacts strongly with CDK4 and CDK6 and inhibits them. The protein is Cyclin-dependent kinase 4 inhibitor D (CDKN2D) of Homo sapiens (Human).